A 1024-amino-acid chain; its full sequence is Protein tiptop (1024 aa).

The segment covering glutamate 20–alanine 35 has biased composition (polar residues). Disordered regions lie at residues glutamate 20 to glycine 40 and glutamate 138 to aspartate 215. Residues aspartate 159–glutamine 175 are compositionally biased toward acidic residues. The C2H2-type 1 zinc-finger motif lies at phenylalanine 317–histidine 341. Residues leucine 350–glutamate 392 form a disordered region. A compositionally biased stretch (low complexity) spans threonine 368–serine 391. Residues leucine 426–histidine 450 form a C2H2-type 2 zinc finger. 5 disordered regions span residues glycine 466 to serine 489, alanine 519 to serine 576, serine 712 to glutamate 759, phenylalanine 786 to alanine 818, and glutamate 868 to threonine 891. The segment covering valine 477 to serine 489 has biased composition (low complexity). The C2H2-type 3 zinc-finger motif lies at leucine 499–histidine 523. Low complexity predominate over residues serine 527 to alanine 537. The span at lysine 543–proline 558 shows a compositional bias: basic residues. Over residues serine 718–serine 729 the composition is skewed to low complexity. The segment covering threonine 745–threonine 755 has biased composition (pro residues). The segment covering phenylalanine 786–proline 795 has biased composition (basic and acidic residues). The span at arginine 796 to arginine 808 shows a compositional bias: polar residues. Low complexity predominate over residues serine 874–threonine 891. The segment at isoleucine 926–histidine 949 adopts a C2H2-type 4 zinc-finger fold. Residues alanine 954–serine 1004 form a disordered region. The segment covering serine 968–glutamine 990 has biased composition (low complexity).

This sequence belongs to the teashirt C2H2-type zinc-finger protein family. As to expression, expression in the Malpighian tubules (MTs) and stomatogastric nervous system starts at embryonic stage 10. At stage 11, expression in the head domain is initiated in the clypeolabrum in two bilaterally symmetric clusters of cells. At stage 12, expression appears in the central nervous system (CNS) of the trunk and the epidermis. The staining in the hindgut is maintained throughout embryogenesis. At stage 13, expression is present in elongating MTs. The anterior staining is detected in cells that invaginate into the stomodeum and by stage 15 onwards, in cells close to the pharynx. Also expressed in cells of the brain, the second constriction of the gut, the trunk epidermis, the anterior segments of the CNS (the three thoracic and the first two abdominal segments) and in the MTs. From stage 12 onwards, tsh and tio are colocalized in some cells.

The protein localises to the nucleus. Its function is as follows. Tiptop (tio) and teashirt (tsh) have, on the whole, common activities. Tio and tsh repress each other's expression and tsh has a crucial role for trunk patterning that is in part masked by ectopic expression of tiptop. Both genes share a common activity required for the activation of Ser and svb and the maintenance of en and wg. The protein is Protein tiptop (tio) of Drosophila melanogaster (Fruit fly).